Here is an 893-residue protein sequence, read N- to C-terminus: MKNKKALFIPLFIIILFIAFFNKIINFIINIKWFKEVNYLAVYFTKMRAIIILMIPIFIIFFISIWMYYKSLIINKNKSVVDIGLNKNNYGKKLFFIFNFIVSIFLAYIFSSSYWYRILQFNNSVDFNVKDPIFFKDVSFYIFKLPLFESLYKVIISLLLFLVITTFIAYFILEAKYKIQSKKDINLKNINHGIKSFAGKQLAIVSGLIILFISFGHLIKIWNLVYSSNGVSFGASYTDVHATLLFYKIIVVITLISSIVTLLSIVKGKFKPVSICIGITIFLIVSQNIASFLVQNFIVKSNEKTLEQPYIKNNIDLTRKAFALDDIEIRDFDIKNDLQKQDITDNKASIDNIRINSFKPTLEFYNQVQIIRYYYTFNDIDIDRYNINGKYNQVFLAAREIDTDALNPNTWQNRHLIYTHGFGAVMNKVNSVTSEGQPDFVIKDIPPYNKTNIKLANPRIYFGEKTNDYVIVNTKINEFDYPKEDSNKTNKYNGHAGIKMSFINRLLFAINKKDINFLLSKDIKKDSKIIINRNIVERAKKIAPFLTYDSDPYMVIYNGKIYWIIDAYTTTNRYPYSEPYDSINYIRNSAKVVIDSVDGDINFYITDKKDPIVNNYAKIFKGLFKEEKDAPKEIREHFRYPKDLFSIQSKVLGKYHVKDPGVFYNGEDLWEVSKDQKHVEGETNTNDAPYIIMKLPDQNKEEMVLLNYFNVMKKDNMIALFGARMDGEQYGKKILYKLPSDKTVYSPYLFKQKINQDTNISKELSLWNREGSKVQYGDTIILPIKNSLLYIEPLYLRASGKNSIPEMKRVILSYNDKLVLSSSIQEGIKEIFNSKDNKINDKNEKDSTKTIDDSKLKKAQEYYNKAIEAQKNGDWTKYGENINELGNILNSIK.

Helical transmembrane passes span isoleucine 9–isoleucine 29, alanine 49–tyrosine 69, leucine 94–tyrosine 114, valine 154–glutamate 174, leucine 202–tryptophan 222, phenylalanine 246–valine 266, and valine 273–leucine 293.

The protein belongs to the UPF0182 family.

The protein localises to the cell membrane. The chain is UPF0182 protein CLB_0018 from Clostridium botulinum (strain ATCC 19397 / Type A).